A 350-amino-acid polypeptide reads, in one-letter code: uncharacterized protein (350 aa).

Disordered stretches follow at residues 1–21 (MDSF…SSLN), 237–266 (NSDV…PISP), and 278–298 (EMST…KKRT). Composition is skewed to polar residues over residues 10-21 (KPTTATSNSSLN) and 246-259 (EDSS…TKPS). The span at 287 to 298 (SRSRTPSSKKRT) shows a compositional bias: basic residues.

The protein resides in the nucleus. This is an uncharacterized protein from Schizosaccharomyces pombe (strain 972 / ATCC 24843) (Fission yeast).